The primary structure comprises 842 residues: MSNILRKVIENDKGELRKLEKIAKKVESYADYMESLSDKDLQAKTPEFKQRYQNGETLEQLLPEAFAVVREAARRVLGLYPYRVQIMGGIVLHNGDVPEMRTGEGKTLTATMPVYLNALAGEGVHVITVNEYLSTRDATEMGEVYSWLGLSVGINLAAKSPAEKREAYLCDITYSTNSEVGFDYLRDNMVVRQEDMVQRPLNFALVDEVDSVLIDEARTPLIVSGAVSSETNQLYIRADMFVKTLDSVDYIIDVPTKTIGLSDSGIDKAESYFNLSNLYDIENVALTHFVDNALRANYIMLLDIDYVVSEEGEILIVDQFTGRTMEGRRFSDGLHQAIEAKEGVRIQEESKTSASITYQNMFRMYKKLAGMTGTAKTEEEEFREVYNMRIIPIPTNRPIARIDHTDLLYATLNSKFKAVVADVKARYEKGQPVLVGTVAVETSDLISKKLVEAGIPHEVLNAKNHFKEAQIIMNAGQRGAVTIATNMAGRGTDIKLGEGVRELGGLCVIGTERHESRRIDNQLRGRSGRQGDPGESQFYLSLEDELMRRFGTDRIKAFLDRMNNDDEDIVIKSRMLSRQVESAQKRVEGNNYDTRKQVLQYDDVMREQREIIYANRRDVITANRDLGPEIKAMIKRTIDRAVDAHSRTNRKDAIDAIVTFARTSIVPEETIGAKELRGLKDDQIKDKLYQRALEIYDKQLSKLRDQDAILEFQKVLILMIVDNKWTEHIDALDQLRNAVGLRGYAQNNPVVEYQSEGFKMFQDMIGAIEFDVTRTMMKAQIHEQERERATQYATTTAAQNIQSQAIGDDFDSSADFSRVERNDACPCHSGKKFKNCHGRKAF.

Residues Q85, 103–107, and D493 contribute to the ATP site; that span reads GEGKT. C825, C827, C836, and H837 together coordinate Zn(2+).

The protein belongs to the SecA family. In terms of assembly, monomer and homodimer. Part of the essential Sec protein translocation apparatus which comprises SecA, SecYEG and auxiliary proteins SecDF. Other proteins may also be involved. The cofactor is Zn(2+).

It is found in the cell membrane. The protein localises to the cytoplasm. It carries out the reaction ATP + H2O + cellular proteinSide 1 = ADP + phosphate + cellular proteinSide 2.. Its function is as follows. Part of the Sec protein translocase complex. Interacts with the SecYEG preprotein conducting channel. Has a central role in coupling the hydrolysis of ATP to the transfer of proteins into and across the cell membrane, serving as an ATP-driven molecular motor driving the stepwise translocation of polypeptide chains across the membrane. This Streptococcus equi subsp. zooepidemicus (strain H70) protein is Protein translocase subunit SecA.